The primary structure comprises 485 residues: Chromosomal replication initiator protein DnaA (485 aa).

The interval 1 to 74 is domain I, interacts with DnaA modulators; that stretch reads MEKSKNIWSL…ILTNNGYDNV (74 aa). A domain II region spans residues 74–140; it reads VTIVFTNQSP…EEEPKNFKNP (67 aa). Positions 141 to 357 are domain III, AAA+ region; it reads FLKKRYTFEN…AAVTKLKAYI (217 aa). Glycine 185, glycine 187, lysine 188, and threonine 189 together coordinate ATP. The segment at 358–485 is domain IV, binds dsDNA; it reads DLDNIEIDID…TELMNKIKKN (128 aa).

Belongs to the DnaA family. In terms of assembly, oligomerizes as a right-handed, spiral filament on DNA at oriC.

Its subcellular location is the cytoplasm. Plays an essential role in the initiation and regulation of chromosomal replication. ATP-DnaA binds to the origin of replication (oriC) to initiate formation of the DNA replication initiation complex once per cell cycle. Binds the DnaA box (a 9 base pair repeat at the origin) and separates the double-stranded (ds)DNA. Forms a right-handed helical filament on oriC DNA; dsDNA binds to the exterior of the filament while single-stranded (ss)DNA is stabiized in the filament's interior. The ATP-DnaA-oriC complex binds and stabilizes one strand of the AT-rich DNA unwinding element (DUE), permitting loading of DNA polymerase. After initiation quickly degrades to an ADP-DnaA complex that is not apt for DNA replication. Binds acidic phospholipids. The polypeptide is Chromosomal replication initiator protein DnaA (Borreliella afzelii (strain PKo) (Borrelia afzelii)).